We begin with the raw amino-acid sequence, 294 residues long: Small ribosomal subunit protein uS2 (294 aa).

Basic and acidic residues predominate over residues 261-274 (MDEDADSKKSKAEE). A disordered region spans residues 261–294 (MDEDADSKKSKAEEPVIPTAEEPAITTIEVDQNE).

It belongs to the universal ribosomal protein uS2 family.

The polypeptide is Small ribosomal subunit protein uS2 (Leptospira borgpetersenii serovar Hardjo-bovis (strain JB197)).